The primary structure comprises 230 residues: Extracellular ribonuclease LE (230 aa).

Positions 1–25 are cleaved as a signal peptide; sequence MASNSAFSLFLILLIITQCLSVLNA. Gln-37 lines the RNA pocket. 5 disulfides stabilise this stretch: Cys-43-Cys-49, Cys-50-Cys-106, Cys-79-Cys-125, Cys-186-Cys-221, and Cys-202-Cys-213. Residues His-64, Phe-114, 117 to 118, and 121 to 122 contribute to the RNA site; these read HE and KH. The active-site Proton donor is the His-64. The active site involves Glu-118. His-122 serves as the catalytic Proton acceptor.

This sequence belongs to the RNase T2 family.

Its subcellular location is the secreted. The protein resides in the extracellular space. It is found in the cell wall. It catalyses the reaction a ribonucleotidyl-ribonucleotide-RNA + H2O = a 3'-end 3'-phospho-ribonucleotide-RNA + a 5'-end dephospho-ribonucleoside-RNA + H(+). In terms of biological role, probably involved in plant phosphate-starvation rescue system. The protein is Extracellular ribonuclease LE of Solanum lycopersicum (Tomato).